Consider the following 107-residue polypeptide: UPF0145 protein MAB_3451c (107 aa).

Belongs to the UPF0145 family.

This chain is UPF0145 protein MAB_3451c, found in Mycobacteroides abscessus (strain ATCC 19977 / DSM 44196 / CCUG 20993 / CIP 104536 / JCM 13569 / NCTC 13031 / TMC 1543 / L948) (Mycobacterium abscessus).